We begin with the raw amino-acid sequence, 234 residues long: Glycoprotein BDLF3 (234 aa).

Positions 1–28 are cleaved as a signal peptide; that stretch reads MAHARDKAGAVMAMILICETSLIWTSSG. Residues 29–62 form a disordered region; the sequence is SSTASAGNVTGTTAVTTPSPSASGPSTNQSTTLT. N-linked (GlcNAc...) asparagine; by host glycosylation is found at Asn36, Asn56, Asn77, Asn96, Asn101, Asn110, Asn127, Asn144, and Asn159. Positions 116–138 are disordered; the sequence is AGTGTSTGVTSNVTTRSSSTTSA. Residues 187 to 207 form a helical membrane-spanning segment; it reads LVFVGLTFLMLILIFAAGLMM.

The protein belongs to the Epstein-Barr virus BDLF3 protein family.

The protein resides in the membrane. This chain is Glycoprotein BDLF3, found in Homo sapiens (Human).